Here is a 245-residue protein sequence, read N- to C-terminus: Gem-associated protein 2 (245 aa).

Belongs to the gemin-2 family. Component of the core survival motor neuron (SMN) complex composed of Smn, Gem2, Gem3, rig/Gem5 and one of 3 almost identical Gem4 paralogs encoded by Glos/Gem4a, Gem4b or Gem4c. Part of a minimal SMN complex composed of Smn and Gem2 only; this complex is active in UsnRNP assembly. The SMN complex associates with the entire set of spliceosomal snRNP Sm proteins, SmB, SmD1, SmD2, SmD3, SmE, SmF and SmG, and with the snRNP-specific proteins snRNP-U1-70K, U2A, snf/U1A and U5-116KD. As to expression, expressed in nurse cells and oocytes.

The protein resides in the cytoplasm. Its subcellular location is the U-body. Functionally, component of the survival motor neuron (SMN) complex that catalyzes the assembly of small nuclear ribonucleoproteins (snRNPs), the building blocks of the spliceosome, and thereby plays an important role in the splicing of cellular pre-mRNAs. Most spliceosomal snRNPs contain a common set of Sm proteins SNRPB, SNRPD1, SNRPD2, SNRPD3, SNRPE, SNRPF and SNRPG that assemble in a heptameric protein ring on the Sm site of the small nuclear RNA to form the core snRNP (Sm core). In the cytosol, the Sm proteins SNRPD1, SNRPD2, SNRPE, SNRPF and SNRPG (5Sm) are trapped in an inactive 6S pICln-Sm complex by the chaperone CLNS1A that controls the assembly of the core snRNP. To assemble core snRNPs, the SMN complex accepts the trapped 5Sm proteins from CLNS1A. Binding of snRNA inside 5Sm ultimately triggers eviction of the SMN complex, thereby allowing binding of SNRPD3 and SNRPB to complete assembly of the core snRNP. Within the SMN complex, GEMIN2 constrains the conformation of 5Sm, thereby promoting 5Sm binding to snRNA containing the snRNP code (a nonameric Sm site and a 3'-adjacent stem-loop), thus preventing progression of assembly until a cognate substrate is bound. Involved in adult motor function. The chain is Gem-associated protein 2 from Drosophila melanogaster (Fruit fly).